A 456-amino-acid polypeptide reads, in one-letter code: Bifunctional protein GlmU (456 aa).

Positions 1–229 are pyrophosphorylase; it reads MYKSAVILAA…PDEIKGVNSR (229 aa). Residues 8–11, lysine 22, glutamine 73, and 78–79 contribute to the UDP-N-acetyl-alpha-D-glucosamine site; these read LAAG and GT. Position 103 (aspartate 103) interacts with Mg(2+). Residues glycine 140, glutamate 155, asparagine 170, and asparagine 227 each coordinate UDP-N-acetyl-alpha-D-glucosamine. Asparagine 227 provides a ligand contact to Mg(2+). The tract at residues 230 to 250 is linker; that stretch reads GQLAEAEEILRLRINERHMEN. An N-acetyltransferase region spans residues 251–456; it reads GVTLIDPKNT…GWVAKKGLKK (206 aa). 2 residues coordinate UDP-N-acetyl-alpha-D-glucosamine: arginine 332 and lysine 350. Catalysis depends on histidine 362, which acts as the Proton acceptor. Tyrosine 365 and asparagine 376 together coordinate UDP-N-acetyl-alpha-D-glucosamine. Acetyl-CoA-binding positions include 385–386, alanine 422, and arginine 439; that span reads NY.

It in the N-terminal section; belongs to the N-acetylglucosamine-1-phosphate uridyltransferase family. The protein in the C-terminal section; belongs to the transferase hexapeptide repeat family. In terms of assembly, homotrimer. The cofactor is Mg(2+).

It is found in the cytoplasm. The catalysed reaction is alpha-D-glucosamine 1-phosphate + acetyl-CoA = N-acetyl-alpha-D-glucosamine 1-phosphate + CoA + H(+). It carries out the reaction N-acetyl-alpha-D-glucosamine 1-phosphate + UTP + H(+) = UDP-N-acetyl-alpha-D-glucosamine + diphosphate. It participates in nucleotide-sugar biosynthesis; UDP-N-acetyl-alpha-D-glucosamine biosynthesis; N-acetyl-alpha-D-glucosamine 1-phosphate from alpha-D-glucosamine 6-phosphate (route II): step 2/2. It functions in the pathway nucleotide-sugar biosynthesis; UDP-N-acetyl-alpha-D-glucosamine biosynthesis; UDP-N-acetyl-alpha-D-glucosamine from N-acetyl-alpha-D-glucosamine 1-phosphate: step 1/1. Its pathway is bacterial outer membrane biogenesis; LPS lipid A biosynthesis. Catalyzes the last two sequential reactions in the de novo biosynthetic pathway for UDP-N-acetylglucosamine (UDP-GlcNAc). The C-terminal domain catalyzes the transfer of acetyl group from acetyl coenzyme A to glucosamine-1-phosphate (GlcN-1-P) to produce N-acetylglucosamine-1-phosphate (GlcNAc-1-P), which is converted into UDP-GlcNAc by the transfer of uridine 5-monophosphate (from uridine 5-triphosphate), a reaction catalyzed by the N-terminal domain. The chain is Bifunctional protein GlmU from Clostridium novyi (strain NT).